We begin with the raw amino-acid sequence, 413 residues long: Replication factor C large subunit (413 aa).

ATP is bound at residue 54–61 (GPPGSGKT).

This sequence belongs to the activator 1 small subunits family. RfcL subfamily. As to quaternary structure, heteromultimer composed of small subunits (RfcS) and large subunits (RfcL).

In terms of biological role, part of the RFC clamp loader complex which loads the PCNA sliding clamp onto DNA. This is Replication factor C large subunit from Thermofilum pendens (strain DSM 2475 / Hrk 5).